Reading from the N-terminus, the 972-residue chain is Serine/threonine-protein kinase ATG1 (972 aa).

The region spanning 18-319 (YVVEKEIGRG…FTEFFSNGLV (302 aa)) is the Protein kinase domain. ATP contacts are provided by residues 24 to 32 (IGRGSFAVV) and K48. Residue D166 is the Proton acceptor of the active site. Disordered stretches follow at residues 359–394 (KRASPIRLGDSCTLRGPCESPQGADPYPQDNTQSDQ), 424–444 (YNNQEERSNEERQFGQVSNGR), 467–506 (ALQSHSHVAAKQIPDKDSKSSVSCQKHAASAPTKNDHRTT), 562–605 (ASQA…SRRP), and 743–764 (DDEEDDIEHSPGAETYRKNSSG). Basic and acidic residues predominate over residues 424-436 (YNNQEERSNEERQ). Residues 562–584 (ASQALQMARHSSTSVSAANTAKQ) show a composition bias toward polar residues. Low complexity predominate over residues 585-605 (TLLRRNSRTLSSSGASTSRRP). The segment covering 750 to 759 (EHSPGAETYR) has biased composition (basic and acidic residues).

It belongs to the protein kinase superfamily. Ser/Thr protein kinase family. APG1/unc-51/ULK1 subfamily. Homodimer. Forms a ternary complex with ATG13 and ATG17.

It localises to the cytoplasm. The protein resides in the preautophagosomal structure membrane. It carries out the reaction L-seryl-[protein] + ATP = O-phospho-L-seryl-[protein] + ADP + H(+). The enzyme catalyses L-threonyl-[protein] + ATP = O-phospho-L-threonyl-[protein] + ADP + H(+). In terms of biological role, serine/threonine protein kinase involved in the cytoplasm to vacuole transport (Cvt) and found to be essential in autophagy, where it is required for the formation of autophagosomes. Involved in the clearance of protein aggregates which cannot be efficiently cleared by the proteasome. Required for selective autophagic degradation of the nucleus (nucleophagy) as well as for mitophagy which contributes to regulate mitochondrial quantity and quality by eliminating the mitochondria to a basal level to fulfill cellular energy requirements and preventing excess ROS production. Also involved in endoplasmic reticulum-specific autophagic process, in selective removal of ER-associated degradation (ERAD) substrates. Plays a key role in ATG9 and ATG23 cycling through the pre-autophagosomal structure and is necessary to promote ATG18 binding to ATG9 through phosphorylation of ATG9. Catalyzes phosphorylation of ATG4, decreasing the interaction between ATG4 and ATG8 and impairing deconjugation of PE-conjugated forms of ATG8. The sequence is that of Serine/threonine-protein kinase ATG1 from Eremothecium gossypii (strain ATCC 10895 / CBS 109.51 / FGSC 9923 / NRRL Y-1056) (Yeast).